A 181-amino-acid polypeptide reads, in one-letter code: Adenylate kinase (181 aa).

10–15 contributes to the ATP binding site; that stretch reads GAGKGT. The tract at residues 30 to 59 is NMP; it reads STGDLFRANIGEGTPLGKEAKSYIDAGKLV. Residues Thr-31, Arg-36, 57–59, 85–88, and Gln-92 contribute to the AMP site; these read KLV and GFPR. The tract at residues 126 to 132 is LID; it reads ARGRADD. Residue Arg-127 participates in ATP binding. The AMP site is built by Arg-129 and Arg-140. Residue Gly-166 coordinates ATP.

It belongs to the adenylate kinase family. Monomer.

It localises to the cytoplasm. The catalysed reaction is AMP + ATP = 2 ADP. The protein operates within purine metabolism; AMP biosynthesis via salvage pathway; AMP from ADP: step 1/1. In terms of biological role, catalyzes the reversible transfer of the terminal phosphate group between ATP and AMP. Plays an important role in cellular energy homeostasis and in adenine nucleotide metabolism. The sequence is that of Adenylate kinase from Corynebacterium diphtheriae (strain ATCC 700971 / NCTC 13129 / Biotype gravis).